The sequence spans 229 residues: Extracellular endonuclease (229 aa).

Positions 1–19 are cleaved as a signal peptide; that stretch reads MSARFIAVFCLFFTVTAHA. Positions 69 to 95 are disordered; the sequence is RADASNGNTSSRPGRSGISASAGKPVG. The span at 71 to 81 shows a compositional bias: polar residues; sequence DASNGNTSSRP.

It belongs to the EndA/NucM nuclease family.

Its subcellular location is the secreted. The polypeptide is Extracellular endonuclease (endX) (Pseudomonas fluorescens biotype A).